The primary structure comprises 545 residues: MTINNILWFRHGLRLHDNPSLLEALKSDCVNQSSEAVKLFPIFIFDGESAGTRIVGYNRMKFLLESLADLDRQFRDLGGQLLVFRGDSVTVLRRLFEELNIKKLCYEQDCEPIWKERDDAVAKLCRTMDVRCVENVSHTLWNPIEVIQTNGDIPPLTYQMFLHTVNIIGDPPRPVGAPNFEYVEFGRVPALLASELKLCQQMPAPDDFGIHYDGNARIAFQKWIGGETRALEALGARLKQEEEAFREGYYLPTQAKPEILGPATSMSAALRFGCLSVRMFYWCVHDLFAKVQSNSQFKYPGGHHITGQLIWREYFYTMSVQNPHYGEMERNPICLNIPWYKPEDDSLTRWKEGRTGFPMIDAAMRQLLAEGWLHHILRNITATFLTRGGLWLSWEEGLQHFLKYLLDADWSVCAGNWMWVSSSAFERLLDSSKCTCPIALARRLDPKGDYVKRYLPELANYPAQFVHEPWKASREQQIEYGCVIGEKYPAPMVDLAIVSKRNAHTMASLREKLVDGGSTPPHCRPSDIEEIRQFFWLADDAATEA.

The region spanning 3–140 (INNILWFRHG…RCVENVSHTL (138 aa)) is the Photolyase/cryptochrome alpha/beta domain. FAD is bound by residues R237, S265, S267, Q308, H375, 407–409 (DAD), C413, and N416.

The protein belongs to the DNA photolyase class-1 family. Interacts with tim and per; promoted by light conditions. It depends on FAD as a cofactor.

It localises to the cytoplasm. The protein resides in the perinuclear region. It is found in the nucleus. In terms of biological role, blue light-dependent regulator that is the input of the circadian feedback loop. Has no photolyase activity for cyclobutane pyrimidine dimers or 6-4 photoproducts. Regulation of expression by light suggests a role in photoreception for locomotor activity rhythms. Functions, together with per, as a transcriptional repressor required for the oscillation of peripheral circadian clocks and for the correct specification of clock cells. Genes directly activated by the transcription factors Clock (Clk) and cycle (cyc) are repressed by cry. The chain is Cryptochrome-1 from Anopheles gambiae (African malaria mosquito).